A 205-amino-acid chain; its full sequence is MAIKIGITGGIGSGKSVVSHLLEVMGVPVYISDEESKKVVATDPVIRKELCDLVGEEVFSGGKLNKTLLATYLFASSTHASQVNGIIHPRVKEHFRQWSSHKECLDIIGMESAILIESGFADEVDCIVMVYAPLELRVERAVRRDNASCEQIMQRIRSQMSDEEKCERASFVIINDGEKPLIPQILELIAFLYQKIHYLCSAKNN.

The region spanning 4–203 (KIGITGGIGS…QKIHYLCSAK (200 aa)) is the DPCK domain. 12–17 (GSGKSV) serves as a coordination point for ATP.

The protein belongs to the CoaE family.

The protein localises to the cytoplasm. The catalysed reaction is 3'-dephospho-CoA + ATP = ADP + CoA + H(+). The protein operates within cofactor biosynthesis; coenzyme A biosynthesis; CoA from (R)-pantothenate: step 5/5. Its function is as follows. Catalyzes the phosphorylation of the 3'-hydroxyl group of dephosphocoenzyme A to form coenzyme A. The sequence is that of Dephospho-CoA kinase from Bacteroides fragilis (strain YCH46).